We begin with the raw amino-acid sequence, 34 residues long: Protamine (34 aa).

The tract at residues 1 to 34 is disordered; that stretch reads PRRRRQASRPVRRRRRTRRSTAERRRRRVVRRRR.

As to expression, testis.

The protein localises to the nucleus. Its subcellular location is the chromosome. In terms of biological role, protamines substitute for histones in the chromatin of sperm during the haploid phase of spermatogenesis. They compact sperm DNA into a highly condensed, stable and inactive complex. In Dicentrarchus labrax (European seabass), this protein is Protamine.